Reading from the N-terminus, the 107-residue chain is Putative ATP synthase subunit f, mitochondrial (107 aa).

The protein belongs to the ATPase F chain family. F-type ATPases have 2 components, CF(1) - the catalytic core - and CF(0) - the membrane proton channel. CF(0) seems to have nine subunits: a, b, c, d, e, f, g, F6 and 8 (or A6L).

The protein resides in the mitochondrion membrane. Its function is as follows. Mitochondrial membrane ATP synthase (F(1)F(0) ATP synthase or Complex V) produces ATP from ADP in the presence of a proton gradient across the membrane which is generated by electron transport complexes of the respiratory chain. F-type ATPases consist of two structural domains, F(1) - containing the extramembraneous catalytic core and F(0) - containing the membrane proton channel, linked together by a central stalk and a peripheral stalk. During catalysis, ATP synthesis in the catalytic domain of F(1) is coupled via a rotary mechanism of the central stalk subunits to proton translocation. Part of the complex F(0) domain. Minor subunit located with subunit a in the membrane. The chain is Putative ATP synthase subunit f, mitochondrial from Drosophila melanogaster (Fruit fly).